Here is a 265-residue protein sequence, read N- to C-terminus: tRNA pseudouridine synthase A (265 aa).

D52 acts as the Nucleophile in catalysis. A substrate-binding site is contributed by Y112.

It belongs to the tRNA pseudouridine synthase TruA family. In terms of assembly, homodimer.

The catalysed reaction is uridine(38/39/40) in tRNA = pseudouridine(38/39/40) in tRNA. Its function is as follows. Formation of pseudouridine at positions 38, 39 and 40 in the anticodon stem and loop of transfer RNAs. The polypeptide is tRNA pseudouridine synthase A (Akkermansia muciniphila (strain ATCC BAA-835 / DSM 22959 / JCM 33894 / BCRC 81048 / CCUG 64013 / CIP 107961 / Muc)).